The primary structure comprises 382 residues: uncharacterized protein (382 aa).

This is an uncharacterized protein from Orgyia pseudotsugata multicapsid polyhedrosis virus (OpMNPV).